A 286-amino-acid polypeptide reads, in one-letter code: Putative inorganic pyrophosphatase C3A12.02 (286 aa).

A diphosphate-binding site is contributed by R85. Mg(2+) is bound by residues D122, D127, and D159.

Belongs to the PPase family. The cofactor is Mg(2+).

The protein localises to the cytoplasm. It carries out the reaction diphosphate + H2O = 2 phosphate + H(+). The polypeptide is Putative inorganic pyrophosphatase C3A12.02 (Schizosaccharomyces pombe (strain 972 / ATCC 24843) (Fission yeast)).